The following is a 299-amino-acid chain: MSDSNLTNPIKAFFHDEFPEQYQEPPGLQKNMKPVPDCGEKSYKGSGKLTGRKALVTGGDSGIGRAAAIAYAREGADVAINYLPEEQPDAEEVKELIEAEGRKAVLIPGDLSDESFCQDLVKQSHHELGGLDVLALVAGKQQAVENIEDLPTEQIYKTFEVNVFSLYWVVKAALPYLPEGASIITTTSVEGYNPSPMLLDYAATKNAIIGFTVGLGKQLASKGIRVNSVAPGPIWTPLQISGGQPTENIPKFGQGTPPAPLNRAGQPVELADVYVFLASENSSYVTSQVYGITGGIPTA.

The tract at residues 1-44 (MSDSNLTNPIKAFFHDEFPEQYQEPPGLQKNMKPVPDCGEKSYK) is disordered. 55–79 (LVTGGDSGIGRAAAIAYAREGADVA) contacts NADP(+). Ser-188 contacts substrate. The active-site Proton acceptor is the Tyr-201.

The protein belongs to the short-chain dehydrogenases/reductases (SDR) family.

This is an uncharacterized protein from Bacillus subtilis (strain 168).